Consider the following 287-residue polypeptide: Undecaprenyl-diphosphatase (287 aa).

6 consecutive transmembrane segments (helical) span residues 50-70, 99-119, 128-148, 206-226, 231-251, and 263-283; these read PGVS…IAYF, IAMA…KLFW, LRSV…LAVA, FLLG…DALA, AGPL…WLAI, and TWLF…WWSI.

The protein belongs to the UppP family.

The protein resides in the cell inner membrane. It carries out the reaction di-trans,octa-cis-undecaprenyl diphosphate + H2O = di-trans,octa-cis-undecaprenyl phosphate + phosphate + H(+). Functionally, catalyzes the dephosphorylation of undecaprenyl diphosphate (UPP). Confers resistance to bacitracin. This is Undecaprenyl-diphosphatase from Parasynechococcus marenigrum (strain WH8102).